Reading from the N-terminus, the 378-residue chain is Erythronate-4-phosphate dehydrogenase (378 aa).

The substrate site is built by Ser-45 and Thr-66. Asp-146 and Thr-175 together coordinate NAD(+). Arg-208 is a catalytic residue. Asp-232 is a binding site for NAD(+). Glu-237 is an active-site residue. His-254 serves as the catalytic Proton donor. Gly-257 provides a ligand contact to NAD(+). Tyr-258 is a substrate binding site.

The protein belongs to the D-isomer specific 2-hydroxyacid dehydrogenase family. PdxB subfamily. In terms of assembly, homodimer.

Its subcellular location is the cytoplasm. It catalyses the reaction 4-phospho-D-erythronate + NAD(+) = (R)-3-hydroxy-2-oxo-4-phosphooxybutanoate + NADH + H(+). It participates in cofactor biosynthesis; pyridoxine 5'-phosphate biosynthesis; pyridoxine 5'-phosphate from D-erythrose 4-phosphate: step 2/5. In terms of biological role, catalyzes the oxidation of erythronate-4-phosphate to 3-hydroxy-2-oxo-4-phosphonooxybutanoate. The chain is Erythronate-4-phosphate dehydrogenase from Escherichia coli (strain 55989 / EAEC).